A 333-amino-acid polypeptide reads, in one-letter code: UDP-3-O-acylglucosamine N-acyltransferase 2 (333 aa).

The active-site Proton acceptor is the His243.

This sequence belongs to the transferase hexapeptide repeat family. LpxD subfamily. Homotrimer.

The catalysed reaction is a UDP-3-O-[(3R)-3-hydroxyacyl]-alpha-D-glucosamine + a (3R)-hydroxyacyl-[ACP] = a UDP-2-N,3-O-bis[(3R)-3-hydroxyacyl]-alpha-D-glucosamine + holo-[ACP] + H(+). The protein operates within bacterial outer membrane biogenesis; LPS lipid A biosynthesis. In terms of biological role, catalyzes the N-acylation of UDP-3-O-acylglucosamine using 3-hydroxyacyl-ACP as the acyl donor. Is involved in the biosynthesis of lipid A, a phosphorylated glycolipid that anchors the lipopolysaccharide to the outer membrane of the cell. The sequence is that of UDP-3-O-acylglucosamine N-acyltransferase 2 from Koribacter versatilis (strain Ellin345).